The chain runs to 293 residues: Phosphate import ATP-binding protein PstB (293 aa).

One can recognise an ABC transporter domain in the interval 46–288; the sequence is MTCRKVDVHY…PGHQLTEDYI (243 aa). 78 to 85 contributes to the ATP binding site; that stretch reads GPSGCGKS.

Belongs to the ABC transporter superfamily. Phosphate importer (TC 3.A.1.7) family. As to quaternary structure, the complex is composed of two ATP-binding proteins (PstB), two transmembrane proteins (PstC and PstA) and a solute-binding protein (PstS).

It is found in the cell inner membrane. It catalyses the reaction phosphate(out) + ATP + H2O = ADP + 2 phosphate(in) + H(+). Part of the ABC transporter complex PstSACB involved in phosphate import. Responsible for energy coupling to the transport system. In Desulfotalea psychrophila (strain LSv54 / DSM 12343), this protein is Phosphate import ATP-binding protein PstB.